We begin with the raw amino-acid sequence, 285 residues long: Putative phosphatase MG125 (285 aa).

Aspartate 8 (nucleophile) is an active-site residue. Residue aspartate 8 coordinates Mg(2+). Residue leucine 9 participates in phosphate binding. Residue aspartate 10 participates in Mg(2+) binding. Phosphate-binding positions include 44–45 (TG) and lysine 205. Mg(2+)-binding residues include aspartate 228 and serine 229. Asparagine 231 provides a ligand contact to phosphate.

It belongs to the HAD-like hydrolase superfamily. Cof family. It depends on Mg(2+) as a cofactor.

The chain is Putative phosphatase MG125 from Mycoplasma genitalium (strain ATCC 33530 / DSM 19775 / NCTC 10195 / G37) (Mycoplasmoides genitalium).